Reading from the N-terminus, the 153-residue chain is 1,4-dihydroxy-2-naphthoyl-CoA hydrolase (153 aa).

D21 is a catalytic residue.

The protein belongs to the 4-hydroxybenzoyl-CoA thioesterase family. DHNA-CoA hydrolase subfamily.

It catalyses the reaction 1,4-dihydroxy-2-naphthoyl-CoA + H2O = 1,4-dihydroxy-2-naphthoate + CoA + H(+). Its pathway is cofactor biosynthesis; phylloquinone biosynthesis. It participates in quinol/quinone metabolism; 1,4-dihydroxy-2-naphthoate biosynthesis; 1,4-dihydroxy-2-naphthoate from chorismate: step 7/7. Its function is as follows. Catalyzes the hydrolysis of 1,4-dihydroxy-2-naphthoyl-CoA (DHNA-CoA) to 1,4-dihydroxy-2-naphthoate (DHNA), a reaction involved in phylloquinone (vitamin K1) biosynthesis. In Synechococcus sp. (strain WH7803), this protein is 1,4-dihydroxy-2-naphthoyl-CoA hydrolase.